We begin with the raw amino-acid sequence, 239 residues long: tRNA (guanine-N(7)-)-methyltransferase (239 aa).

The S-adenosyl-L-methionine site is built by E69, E94, D121, and D144. The active site involves D144. K148 contributes to the substrate binding site. The interaction with RNA stretch occupies residues 150-155 (RHNKRR). Residues D180 and 217-220 (TKFE) contribute to the substrate site.

It belongs to the class I-like SAM-binding methyltransferase superfamily. TrmB family. In terms of assembly, monomer.

The catalysed reaction is guanosine(46) in tRNA + S-adenosyl-L-methionine = N(7)-methylguanosine(46) in tRNA + S-adenosyl-L-homocysteine. The protein operates within tRNA modification; N(7)-methylguanine-tRNA biosynthesis. Functionally, catalyzes the formation of N(7)-methylguanine at position 46 (m7G46) in tRNA. The polypeptide is tRNA (guanine-N(7)-)-methyltransferase (Salmonella typhi).